The primary structure comprises 597 residues: NADH-quinone oxidoreductase subunit C/D (597 aa).

Positions 1 to 187 (MIDENKKKNT…ESFFLDEQKE (187 aa)) are NADH dehydrogenase I subunit C. Positions 211 to 597 (DFMFLNLGPN…IDFVMSDVDR (387 aa)) are NADH dehydrogenase I subunit D.

This sequence in the N-terminal section; belongs to the complex I 30 kDa subunit family. The protein in the C-terminal section; belongs to the complex I 49 kDa subunit family. In terms of assembly, NDH-1 is composed of 13 different subunits. Subunits NuoB, CD, E, F, and G constitute the peripheral sector of the complex.

Its subcellular location is the cell inner membrane. The catalysed reaction is a quinone + NADH + 5 H(+)(in) = a quinol + NAD(+) + 4 H(+)(out). NDH-1 shuttles electrons from NADH, via FMN and iron-sulfur (Fe-S) centers, to quinones in the respiratory chain. The immediate electron acceptor for the enzyme in this species is believed to be ubiquinone. Couples the redox reaction to proton translocation (for every two electrons transferred, four hydrogen ions are translocated across the cytoplasmic membrane), and thus conserves the redox energy in a proton gradient. The polypeptide is NADH-quinone oxidoreductase subunit C/D (Buchnera aphidicola subsp. Schizaphis graminum (strain Sg)).